Reading from the N-terminus, the 750-residue chain is Photosystem I P700 chlorophyll a apoprotein A1 (750 aa).

8 consecutive transmembrane segments (helical) span residues 70–93, 156–179, 195–219, 291–309, 346–369, 385–411, 433–455, and 531–549; these read VFSAHFGQLSIIFLWLSGMYFHGA, LYCTAIGALVFAALMLFAGWFHYH, LNHHLAGLLGLGSLSWAGHQVHVSL, IAHHHLAIAILFLLAGHMY, WHAQLSLNLAMLGSLTIVVAHHMY, LSLFTHHMWIGGFLIVGAAAHAAIFMV, AIISHLNWVCIFLGFHSFGLYIH, and FLVHHIHAFTIHVTVLILL. Positions 573 and 582 each coordinate [4Fe-4S] cluster. 2 helical membrane passes run 589–610 and 664–686; these read HVFLGLFWMYNAISVVIFHFSW and LSAYGLFFLGAHFVWAFSLMFLF. Residue H675 participates in chlorophyll a' binding. 2 residues coordinate chlorophyll a: M683 and Y691. Residue W692 participates in phylloquinone binding. Residues 724-744 traverse the membrane as a helical segment; that stretch reads AVGVTHYLLGGIATTWAFFLA.

It belongs to the PsaA/PsaB family. The PsaA/B heterodimer binds the P700 chlorophyll special pair and subsequent electron acceptors. PSI consists of a core antenna complex that captures photons, and an electron transfer chain that converts photonic excitation into a charge separation. The eukaryotic PSI reaction center is composed of at least 11 subunits. P700 is a chlorophyll a/chlorophyll a' dimer, A0 is one or more chlorophyll a, A1 is one or both phylloquinones and FX is a shared 4Fe-4S iron-sulfur center. serves as cofactor.

The protein localises to the plastid. It localises to the chloroplast thylakoid membrane. It carries out the reaction reduced [plastocyanin] + hnu + oxidized [2Fe-2S]-[ferredoxin] = oxidized [plastocyanin] + reduced [2Fe-2S]-[ferredoxin]. Its function is as follows. PsaA and PsaB bind P700, the primary electron donor of photosystem I (PSI), as well as the electron acceptors A0, A1 and FX. PSI is a plastocyanin-ferredoxin oxidoreductase, converting photonic excitation into a charge separation, which transfers an electron from the donor P700 chlorophyll pair to the spectroscopically characterized acceptors A0, A1, FX, FA and FB in turn. Oxidized P700 is reduced on the lumenal side of the thylakoid membrane by plastocyanin. The protein is Photosystem I P700 chlorophyll a apoprotein A1 of Arabis hirsuta (Hairy rock-cress).